The sequence spans 137 residues: Large ribosomal subunit protein uL16 (137 aa).

It belongs to the universal ribosomal protein uL16 family. Part of the 50S ribosomal subunit.

Functionally, binds 23S rRNA and is also seen to make contacts with the A and possibly P site tRNAs. The chain is Large ribosomal subunit protein uL16 from Streptococcus pyogenes serotype M1.